Here is a 149-residue protein sequence, read N- to C-terminus: Protein SprT-like (149 aa).

Residues 6–147 (LQKLTEDISL…CGKCRGKIKR (142 aa)) enclose the SprT-like domain. Position 67 (H67) interacts with Zn(2+). The active site involves E68. Position 71 (H71) interacts with Zn(2+).

Belongs to the SprT family. The cofactor is Zn(2+).

It localises to the cytoplasm. This is Protein SprT-like from Bacillus velezensis (strain DSM 23117 / BGSC 10A6 / LMG 26770 / FZB42) (Bacillus amyloliquefaciens subsp. plantarum).